We begin with the raw amino-acid sequence, 217 residues long: Putative thymidylate synthase (217 aa).

C139 is a catalytic residue.

Belongs to the thymidylate synthase family. Archaeal-type ThyA subfamily. Monomer.

The protein localises to the cytoplasm. The protein operates within pyrimidine metabolism; dTTP biosynthesis. In terms of biological role, may catalyze the biosynthesis of dTMP using an unknown cosubstrate. The sequence is that of Putative thymidylate synthase from Methanosarcina barkeri (strain Fusaro / DSM 804).